Here is a 194-residue protein sequence, read N- to C-terminus: 7-methyl-GTP pyrophosphatase (194 aa).

The Proton acceptor role is filled by D67.

The protein belongs to the Maf family. YceF subfamily. The cofactor is a divalent metal cation.

The protein resides in the cytoplasm. It catalyses the reaction N(7)-methyl-GTP + H2O = N(7)-methyl-GMP + diphosphate + H(+). In terms of biological role, nucleoside triphosphate pyrophosphatase that hydrolyzes 7-methyl-GTP (m(7)GTP). May have a dual role in cell division arrest and in preventing the incorporation of modified nucleotides into cellular nucleic acids. This is 7-methyl-GTP pyrophosphatase from Pseudoalteromonas atlantica (strain T6c / ATCC BAA-1087).